We begin with the raw amino-acid sequence, 314 residues long: MTRAVAEDLASSLEPDYRILHVLTTGGLEDLMDAIKTARKSEVDLLIGVGGGKPLDITKILAAELGVRYVVVPTSASHDGIASPSVSFTLSREIEERFGRVIRVEAPTAILADTTIINRASPITFKSGFGDLVAKITAVRDWELAYKLRDEPYSEYAASMSLLSAKIAMDHAHEIRTRLEESTRILVKALIGSGVAMSIAGSSRPASGSEHMFSHALDILSSEAGVKPAPHGIQVAIGTIMMAYLQGQDWKMIKEKLIEAGVPTTAEEAGISPDMIVKALTIAHKIRERYTILGSSGLTLSAAEKLARVTGVIK.

NAD(+)-binding positions include 52-56 and 74-77; these read GKPLD and TSAS. D79 lines the substrate pocket. S83 serves as a coordination point for NAD(+). Substrate is bound at residue D131. 2 residues coordinate Zn(2+): D131 and H211. Position 215 (H215) interacts with substrate. Position 231 (H231) interacts with Zn(2+).

It belongs to the glycerol-1-phosphate dehydrogenase family. Zn(2+) is required as a cofactor.

It localises to the cytoplasm. It catalyses the reaction sn-glycerol 1-phosphate + NAD(+) = dihydroxyacetone phosphate + NADH + H(+). It carries out the reaction sn-glycerol 1-phosphate + NADP(+) = dihydroxyacetone phosphate + NADPH + H(+). It participates in membrane lipid metabolism; glycerophospholipid metabolism. In terms of biological role, catalyzes the NAD(P)H-dependent reduction of dihydroxyacetonephosphate (DHAP or glycerone phosphate) to glycerol 1-phosphate (G1P). The G1P thus generated is used as the glycerophosphate backbone of phospholipids in the cellular membranes of Archaea. This is Glycerol-1-phosphate dehydrogenase [NAD(P)+] from Korarchaeum cryptofilum (strain OPF8).